Here is a 217-residue protein sequence, read N- to C-terminus: Adenylate kinase (217 aa).

An ATP-binding site is contributed by 10 to 15; that stretch reads GAGKGT. The segment at 30–59 is NMP; it reads STGDMFRAAMKEETPLGLEAKSYIDKGELV. AMP-binding positions include Thr31, Arg36, 57-59, 85-88, and Gln92; these read ELV and GFPR. Residues 126–163 form an LID region; sequence GRRICSVCGTTYHLVFNPPKTPGICDKDGGELYQRADD. Arg127 contacts ATP. Residues Cys130 and Cys133 each contribute to the Zn(2+) site. An ATP-binding site is contributed by 136-137; it reads TY. Positions 150 and 153 each coordinate Zn(2+). AMP is bound by residues Arg160 and Arg171. Gln199 serves as a coordination point for ATP.

Belongs to the adenylate kinase family. Monomer.

The protein localises to the cytoplasm. The catalysed reaction is AMP + ATP = 2 ADP. Its pathway is purine metabolism; AMP biosynthesis via salvage pathway; AMP from ADP: step 1/1. Its function is as follows. Catalyzes the reversible transfer of the terminal phosphate group between ATP and AMP. Plays an important role in cellular energy homeostasis and in adenine nucleotide metabolism. This Bacillus subtilis (strain 168) protein is Adenylate kinase.